The chain runs to 194 residues: Putative L,D-transpeptidase YciB (194 aa).

An N-terminal signal peptide occupies residues methionine 1 to alanine 19. The N-palmitoyl cysteine moiety is linked to residue cysteine 20. Cysteine 20 carries the S-diacylglycerol cysteine lipid modification. One can recognise a L,D-TPase catalytic domain in the interval valine 68–serine 194. The active-site Proton donor/acceptor is the histidine 144. Catalysis depends on cysteine 170, which acts as the Nucleophile.

Belongs to the YkuD family.

Its subcellular location is the cell membrane. It participates in cell wall biogenesis; peptidoglycan biosynthesis. In Bacillus subtilis (strain 168), this protein is Putative L,D-transpeptidase YciB (yciB).